The sequence spans 1481 residues: MFHEEVPNSTHPQEQDCLPSQHANAYKDMPVGQENGGVSEAGECLSSTSCEYGPSTSAEACVLAATRRGPTLLHIDRHQIPAVEPSAQALELQGLGVDVYDQAVLEQGVLQQVDSAMHEASCVAQLADAEKEYQSVLDDLMSCTTSLRQINKIIEQLSPQAASNRDINRKLDSVKRQKYNKEQQLKKITAKQKRLQAILGGAGVQVELDHASLEEDDAEPGPSCLGSMLMPAQETAWEELIRTGQMTPFGTPAPQKQEKKPRKIMLNEASGFEKYLAEQAQLSFERKKQAATKRTAKKAIVISESSRAAIETKADQRSQVLSQTDKRLKKHSRKLQRRALQFQGKVGLPSGKKPLEPEVRPEAEGDTEGEESGSSPTDGEEEEEQEEEEGVASLSSDDVSYELKPLRKRQKYQKKVPVQEIDDDFFPSSEEEDEAMEGRGGGRKVARRQDDGDEDYYKQRLRRWNRLRLQDKEKRLKLEDDSEESDAEFDEGFKVPGFLFKKLFKYQQTGVRWLWELHCQQAGGILGDEMGLGKTIQIIAFLAGLSYSKIRTRGSNYRFEGLGPTIIVCPTTVMHQWVKEFHTWWPPFRVAVLHETGSYTHKKERLIRDIVYCHGVLITSYSYIRLMQDDISRHDWHYVILDEGHKIRNPNAAVTLACKQFRTPHRIILSGSPMQNNLRELWSLFDFIFPGKLGTLPVFMEQFSVPITMGGYSNASPVQVKTAYKCACVLRDTINPYLLRRMKSDVKMSLSLPDKNEQVLFCRLTDEQHKVYQNFIDSKAVYRILNGENQIFSGLVALRKICNHPDLFSGGPKNASGPPEDELEEEQFGHWRRSGKMIVVESLLKIWHRQGQRVLLFSQSRQMLHILEVFLRAHKYSYLKMDGTTTIASRQPLITKYNEDTSIFVFLLTTRVGGLGVNLTGANRVIIYDPDWNPSTDTQARERAWRIGQKKQVTVYRLLTAGTIEEKIYHRQIFKQFLTNRVLKDPKQRRFFKSNDLYELFTLTSPDASQGTETSAIFAGTGSSIQTPKCQLKKRTSTVLGTDPKCKKPPVSDTPANAATLIGEKPKAAGATGRSVTSGESGPFKGDHDTNGNRASSVAFGEETDAGSTLEHLSVMSGDGKHSDSPTVDHTSRPPVEASTSEKQGSSYAGARCQAQTEPVPMSEQMEGQFSKYKSKRKHDASEEETTEKRPQPKQKAKNSKHCRDAKFEGTRVPHLVKKRRYRQQTSEQEGGAKDRSSDDYVLEKLFKKSVGVHSVVRHDAIIDGSSPDYVLVEAEANRVAQDALKALRLSRQQCLGAASGVPTWTGHRGISGAPTGVKNRFGQKRDSSLPVQHPSSLTEKTQNNMKKEGKAHTPEHFSGKEDGASVSGAPSSSSLLARMRARNHMILPERLESDSEHLAEAAAVPPCGTEHDDLLVDMRNFIAFQAQVDGQASTQEILQEFESKLSVAQSCVFRELLRNLCNFHRTPGGEGIWKLKPEYC.

Positions 1–506 are N-terminal domain; essential for its chromatin remodeling activity; that stretch reads MFHEEVPNST…GFLFKKLFKY (506 aa). S158 carries the phosphoserine; by CDK2 modification. K170 is modified (N6-methylated lysine; by EHMT2). A Glycyl lysine isopeptide (Lys-Gly) (interchain with G-Cter in SUMO2) cross-link involves residue K256. Residue K298 is modified to N6-methylated lysine; by EHMT2. The segment at 309-452 is disordered; that stretch reads AIETKADQRS…RKVARRQDDG (144 aa). Over residues 327 to 337 the composition is skewed to basic residues; the sequence is RLKKHSRKLQR. The segment covering 353 to 363 has biased composition (basic and acidic residues); that stretch reads KPLEPEVRPEA. 2 stretches are compositionally biased toward acidic residues: residues 378–390 and 420–435; these read DGEE…EEEG and EIDD…EDEA. Phosphoserine is present on residues S428 and S429. K444 carries the N6-methylated lysine; by EHMT2 modification. Residues S482 and S485 each carry the phosphoserine modification. The region spanning 515–691 is the Helicase ATP-binding domain; the sequence is WELHCQQAGG…WSLFDFIFPG (177 aa). 528–535 contacts ATP; it reads DEMGLGKT. The DEAH box motif lies at 642-645; that stretch reads DEGH. Residues 839 to 998 enclose the Helicase C-terminal domain; the sequence is VVESLLKIWH…RRFFKSNDLY (160 aa). Disordered stretches follow at residues 1040–1096, 1114–1238, and 1307–1372; these read LGTD…NRAS, SVMS…DRSS, and GHRG…GAPS. N6-methylated lysine; by EHMT2 is present on K1047. A compositionally biased stretch (polar residues) spans 1138–1147; that stretch reads ASTSEKQGSS. The segment covering 1192-1201 has biased composition (basic residues); the sequence is QPKQKAKNSK. Residues 1202 to 1212 are compositionally biased toward basic and acidic residues; sequence HCRDAKFEGTR. A compositionally biased stretch (polar residues) spans 1330 to 1345; sequence LPVQHPSSLTEKTQNN. Basic and acidic residues predominate over residues 1346–1364; the sequence is MKKEGKAHTPEHFSGKEDG. Positions 1373 to 1385 match the CSA-interacting motif (CIM) motif; the sequence is SSSLLARMRARNH. The ubiquitin-binding domain (UBD) stretch occupies residues 1387-1416; sequence ILPERLESDSEHLAEAAAVPPCGTEHDDLL. The interval 1417–1481 is winged-helix domain (WHD); sequence VDMRNFIAFQ…GIWKLKPEYC (65 aa). The essential for its interaction with RNA polymerase II, transcription-coupled nucleotide excision repair activity, association with chromatin after UV irradiation and for mediating the UV-induced translocation of ERRC8 to the nuclear matrix stretch occupies residues 1434-1481; the sequence is STQEILQEFESKLSVAQSCVFRELLRNLCNFHRTPGGEGIWKLKPEYC.

This sequence belongs to the SNF2/RAD54 helicase family. In terms of assembly, homodimer. Binds DNA. Interacts with ERCC8. Interacts with RNA polymerase II; interaction is enhanced by UV irradiation. Component of the B-WICH complex, at least composed of SMARCA5/SNF2H, BAZ1B/WSTF, SF3B1, DEK, MYO1C, ERCC6, MYBBP1A and DDX21. Interacts with KIAA1530/UVSSA. Interacts with ELOA and CUL5; the interaction is induced by DNA damaging agents or by inhibitors of RNA polymerase II elongation. Interacts (via WHD region) with RIF1. Interacts with SMARCC2/BAF170, SMARCB1/BAF47 and the neuron-specific chromatin remodeling complex (nBAF complex). Interacts with ERCC5/XPG (via C-terminus); the interaction stimulates ERCC6/CSB binding to DNA repair bubble and ERCC6/CSB ATPase activity. May form a complex composed of RNA polymerase II, ERCC6/CSB and ERCC5/XPG which associates with the DNA repair bubble during transcription-coupled nucleotide excision repair. Interacts with CAND1, CSTF1, DDX3X, DDX5, DDX17, DDX23, DHX36, HDAC1, HNRNPU, MTA2, PRPF3, PSMD3, RBBP4, SFPQ, SMARCA1, SMARCA2, TOP1, USP7 and XRCC5. Phosphorylated in a cell cycle-dependent manner at Ser-158 by cyclin A-CDK2 in response to DNA damage. Phosphorylation at this site promotes the intramolecular interaction of the N-terminal domain with the helicase ATP-binding domain, thereby probably releasing the inhibitory effect of the N-terminal domain on its ATPase activity. Phosphorylation is essential for its chromatin remodeling activity. In terms of processing, ubiquitinated at the C-terminus. Ubiquitination by the CSA complex leads to ERCC6 proteasomal degradation in a UV-dependent manner. Stabilized following interaction with KIAA1530/UVSSA, which promotes recruitment of deubiquitinating enzyme USP7, leading to deubiquitination of ERCC6 thereby preventing UV-induced degradation of ERCC6 by the proteasome.

It is found in the nucleus. It localises to the chromosome. The catalysed reaction is ATP + H2O = ADP + phosphate + H(+). Its function is as follows. Essential factor involved in transcription-coupled nucleotide excision repair (TC-NER), a process during which RNA polymerase II-blocking lesions are rapidly removed from the transcribed strand of active genes. Plays a central role in the initiation of the TC-NER process: specifically recognizes and binds RNA polymerase II stalled at a lesion, and mediates recruitment of ERCC8/CSA, initiating DNA damage excision by TFIIH recruitment. Upon DNA-binding, it locally modifies DNA conformation by wrapping the DNA around itself, thereby modifying the interface between stalled RNA polymerase II and DNA. Acts as a chromatin remodeler at DSBs; DNA-dependent ATPase-dependent activity is essential for this function. Plays an important role in regulating the choice of the DNA double-strand breaks (DSBs) repair pathway and G2/M checkpoint activation; DNA-dependent ATPase activity is essential for this function. Regulates the DNA repair pathway choice by inhibiting non-homologous end joining (NHEJ), thereby promoting the homologous recombination (HR)-mediated repair of DSBs during the S/G2 phases of the cell cycle. Mediates the activation of the ATM- and CHEK2-dependent DNA damage responses thus preventing premature entry of cells into mitosis following the induction of DNA DSBs. Remodels chromatin by evicting histones from chromatin flanking DSBs, limiting RIF1 accumulation at DSBs thereby promoting BRCA1-mediated HR. Required for stable recruitment of ELOA and CUL5 to DNA damage sites. Also involved in UV-induced translocation of ERCC8 to the nuclear matrix. Essential for neuronal differentiation and neuritogenesis; regulates transcription and chromatin remodeling activities required during neurogenesis. This is DNA excision repair protein ERCC-6 (Ercc6) from Mus musculus (Mouse).